We begin with the raw amino-acid sequence, 213 residues long: ATP phosphoribosyltransferase (213 aa).

Belongs to the ATP phosphoribosyltransferase family. Short subfamily. Heteromultimer composed of HisG and HisZ subunits.

The protein localises to the cytoplasm. The enzyme catalyses 1-(5-phospho-beta-D-ribosyl)-ATP + diphosphate = 5-phospho-alpha-D-ribose 1-diphosphate + ATP. Its pathway is amino-acid biosynthesis; L-histidine biosynthesis; L-histidine from 5-phospho-alpha-D-ribose 1-diphosphate: step 1/9. Functionally, catalyzes the condensation of ATP and 5-phosphoribose 1-diphosphate to form N'-(5'-phosphoribosyl)-ATP (PR-ATP). Has a crucial role in the pathway because the rate of histidine biosynthesis seems to be controlled primarily by regulation of HisG enzymatic activity. The polypeptide is ATP phosphoribosyltransferase (Crocosphaera subtropica (strain ATCC 51142 / BH68) (Cyanothece sp. (strain ATCC 51142))).